The following is a 295-amino-acid chain: Protease HtpX (295 aa).

The next 2 helical transmembrane spans lie at 4–24 (ILLF…TLSL) and 42–62 (QLLV…LFIS). His147 serves as a coordination point for Zn(2+). Glu148 is an active-site residue. His151 provides a ligand contact to Zn(2+). Transmembrane regions (helical) follow at residues 158–178 (VTLA…ARII) and 199–219 (ITTI…VMWF). Glu224 provides a ligand contact to Zn(2+).

This sequence belongs to the peptidase M48B family. The cofactor is Zn(2+).

Its subcellular location is the cell inner membrane. This chain is Protease HtpX, found in Pseudomonas savastanoi pv. phaseolicola (strain 1448A / Race 6) (Pseudomonas syringae pv. phaseolicola (strain 1448A / Race 6)).